Reading from the N-terminus, the 369-residue chain is Histone deacetylase-like amidohydrolase (369 aa).

Histidine 143 (proton donor/acceptor) is an active-site residue. 3 residues coordinate Zn(2+): aspartate 180, histidine 182, and aspartate 268.

Belongs to the histone deacetylase family. As to quaternary structure, homotetramer; dimer of dimers. It depends on Zn(2+) as a cofactor.

Its activity is regulated as follows. Zinc, and cobalt and nickel at a lesser extent, are able to increase the catalytic activity (2.2-, 1.3- and 1.1-fold respectively) at concentrations of 1 mM. Higher concentrations have an inhibitory effect. Magnesium, manganese and calcium have no effect on activity at concentrations between 0 and 10 mM. At 100 mM, the catalytic activity is increased between 1.2- and 2.1-fold. Hydroxamates like TSA and SAHA inhibit the enzyme. Is also inhibited by azobenzenes, stilbenes and arylazopyrazoles. Functionally, exhibits significant levels of protein deacetylase activity comparable to those of eukaryotic HDACs in assays both with fluorogenic peptidic substrates and acetate-radiolabeled histones. Accepts proteins with epsilon-acetylated lysine residues and tritiated-acetate-prelabeled chicken histones as substrates. The natural substrate protein is not yet known. This is Histone deacetylase-like amidohydrolase (hdaH) from Alcaligenes sp. (strain DSM 11172) (Bordetella sp. (strain FB188)).